A 255-amino-acid chain; its full sequence is Acetyl-coenzyme A carboxylase carboxyl transferase subunit alpha (255 aa).

Residues 1–235 (MNIAKIVREA…KKELQTELAR (235 aa)) enclose the CoA carboxyltransferase C-terminal domain.

It belongs to the AccA family. As to quaternary structure, acetyl-CoA carboxylase is a heterohexamer composed of biotin carboxyl carrier protein (AccB), biotin carboxylase (AccC) and two subunits each of ACCase subunit alpha (AccA) and ACCase subunit beta (AccD).

It localises to the cytoplasm. The enzyme catalyses N(6)-carboxybiotinyl-L-lysyl-[protein] + acetyl-CoA = N(6)-biotinyl-L-lysyl-[protein] + malonyl-CoA. Its pathway is lipid metabolism; malonyl-CoA biosynthesis; malonyl-CoA from acetyl-CoA: step 1/1. Component of the acetyl coenzyme A carboxylase (ACC) complex. First, biotin carboxylase catalyzes the carboxylation of biotin on its carrier protein (BCCP) and then the CO(2) group is transferred by the carboxyltransferase to acetyl-CoA to form malonyl-CoA. The polypeptide is Acetyl-coenzyme A carboxylase carboxyl transferase subunit alpha (Streptococcus pneumoniae serotype 2 (strain D39 / NCTC 7466)).